The chain runs to 100 residues: Urease subunit gamma (100 aa).

Belongs to the urease gamma subunit family. In terms of assembly, heterotrimer of UreA (gamma), UreB (beta) and UreC (alpha) subunits. Three heterotrimers associate to form the active enzyme.

Its subcellular location is the cytoplasm. It catalyses the reaction urea + 2 H2O + H(+) = hydrogencarbonate + 2 NH4(+). The protein operates within nitrogen metabolism; urea degradation; CO(2) and NH(3) from urea (urease route): step 1/1. The polypeptide is Urease subunit gamma (Bacillus sp. (strain TB-90)).